We begin with the raw amino-acid sequence, 269 residues long: Hydroxyethylthiazole kinase (269 aa).

Substrate is bound at residue Met45. ATP is bound by residues Arg121 and Thr167. Gly194 is a substrate binding site.

The protein belongs to the Thz kinase family. It depends on Mg(2+) as a cofactor.

The enzyme catalyses 5-(2-hydroxyethyl)-4-methylthiazole + ATP = 4-methyl-5-(2-phosphooxyethyl)-thiazole + ADP + H(+). The protein operates within cofactor biosynthesis; thiamine diphosphate biosynthesis; 4-methyl-5-(2-phosphoethyl)-thiazole from 5-(2-hydroxyethyl)-4-methylthiazole: step 1/1. In terms of biological role, catalyzes the phosphorylation of the hydroxyl group of 4-methyl-5-beta-hydroxyethylthiazole (THZ). The polypeptide is Hydroxyethylthiazole kinase (Geobacillus sp. (strain WCH70)).